Consider the following 389-residue polypeptide: Putative glutamate--cysteine ligase 2 (389 aa).

This sequence belongs to the glutamate--cysteine ligase type 2 family. YbdK subfamily.

The enzyme catalyses L-cysteine + L-glutamate + ATP = gamma-L-glutamyl-L-cysteine + ADP + phosphate + H(+). Functionally, ATP-dependent carboxylate-amine ligase which exhibits weak glutamate--cysteine ligase activity. This Rhodospirillum rubrum (strain ATCC 11170 / ATH 1.1.1 / DSM 467 / LMG 4362 / NCIMB 8255 / S1) protein is Putative glutamate--cysteine ligase 2.